The sequence spans 511 residues: Ribonuclease Y (511 aa).

The helical transmembrane segment at 2-22 (ITTVIIAIVCFAVGGGLSYML) threads the bilayer. Positions 201 to 261 (SVTVFHIESD…VRREIARLAL (61 aa)) constitute a KH domain. One can recognise an HD domain in the interval 327-420 (LLQHARETAN…VQVCDAISGA (94 aa)).

The protein belongs to the RNase Y family.

Its subcellular location is the cell membrane. Its function is as follows. Endoribonuclease that initiates mRNA decay. The sequence is that of Ribonuclease Y from Phocaeicola vulgatus (strain ATCC 8482 / DSM 1447 / JCM 5826 / CCUG 4940 / NBRC 14291 / NCTC 11154) (Bacteroides vulgatus).